We begin with the raw amino-acid sequence, 161 residues long: Ribosome maturation factor RimP (161 aa).

It belongs to the RimP family.

It is found in the cytoplasm. Required for maturation of 30S ribosomal subunits. This chain is Ribosome maturation factor RimP, found in Desulfosudis oleivorans (strain DSM 6200 / JCM 39069 / Hxd3) (Desulfococcus oleovorans).